The following is a 130-amino-acid chain: Dihydroneopterin aldolase (130 aa).

Residues Glu-22, Tyr-54, and 73-74 (IE) contribute to the substrate site. Lys-100 (proton donor/acceptor) is an active-site residue.

The protein belongs to the DHNA family.

It carries out the reaction 7,8-dihydroneopterin = 6-hydroxymethyl-7,8-dihydropterin + glycolaldehyde. It participates in cofactor biosynthesis; tetrahydrofolate biosynthesis; 2-amino-4-hydroxy-6-hydroxymethyl-7,8-dihydropteridine diphosphate from 7,8-dihydroneopterin triphosphate: step 3/4. In terms of biological role, catalyzes the conversion of 7,8-dihydroneopterin to 6-hydroxymethyl-7,8-dihydropterin. This Methylorubrum extorquens (strain ATCC 14718 / DSM 1338 / JCM 2805 / NCIMB 9133 / AM1) (Methylobacterium extorquens) protein is Dihydroneopterin aldolase (folB).